We begin with the raw amino-acid sequence, 108 residues long: Large ribosomal subunit protein uL23 (108 aa).

The protein belongs to the universal ribosomal protein uL23 family. Part of the 50S ribosomal subunit. Contacts protein L29, and trigger factor when it is bound to the ribosome.

In terms of biological role, one of the early assembly proteins it binds 23S rRNA. One of the proteins that surrounds the polypeptide exit tunnel on the outside of the ribosome. Forms the main docking site for trigger factor binding to the ribosome. The protein is Large ribosomal subunit protein uL23 of Albidiferax ferrireducens (strain ATCC BAA-621 / DSM 15236 / T118) (Rhodoferax ferrireducens).